The primary structure comprises 158 residues: Non-secretory ribonuclease (158 aa).

Positions 1–27 (MVPKLFTSQICLLLLLGLSSLEVSLHA) are cleaved as a signal peptide. C-linked (Man) tryptophan glycosylation is present at W34. H42 functions as the Proton acceptor in the catalytic mechanism. Y60 bears the 3'-nitrotyrosine mark. 65 to 69 (KNRNT) serves as a coordination point for substrate. N-linked (GlcNAc...) asparagine glycans are attached at residues N86, N92, and N111. H153 acts as the Proton donor in catalysis.

It belongs to the pancreatic ribonuclease family. Interacts with and forms a tight 1:1 complex with RNH1. Dimerization of two such complexes may occur.

Its subcellular location is the lysosome. The protein resides in the cytoplasmic granule. It carries out the reaction an [RNA] containing cytidine + H2O = an [RNA]-3'-cytidine-3'-phosphate + a 5'-hydroxy-ribonucleotide-3'-[RNA].. The enzyme catalyses an [RNA] containing uridine + H2O = an [RNA]-3'-uridine-3'-phosphate + a 5'-hydroxy-ribonucleotide-3'-[RNA].. Its function is as follows. This is a non-secretory ribonuclease. It is a pyrimidine specific nuclease with a slight preference for U. Cytotoxin and helminthotoxin. Possesses a wide variety of biological activities. The polypeptide is Non-secretory ribonuclease (RNASE2) (Saguinus labiatus (Red-chested mustached tamarin)).